The chain runs to 259 residues: Ferritin-2, chloroplastic (259 aa).

A chloroplast-targeting transit peptide spans 1-52; it reads MLLKLAPAFTLLNSHGENLSPMLSTSSQGFVLKNFSTKSRNGLLVVCASKGS. The extension peptide (EP) stretch occupies residues 53–85; the sequence is NTKPLTGVVFEPFEEVKKELMLVPTVPQVSLAR. One can recognise a Ferritin-like diiron domain in the interval 86–239; the sequence is HKYSDQCEAA…EYVAQLRRVG (154 aa). Positions 103, 138, 141, and 221 each coordinate Fe cation.

The protein belongs to the ferritin family. In terms of assembly, oligomer of 24 subunits. There are two types of subunits: L (light) chain and H (heavy) chain. The major chain can be light or heavy, depending on the species and tissue type. The functional molecule forms a roughly spherical shell with a diameter of 12 nm and contains a central cavity into which the insoluble mineral iron core is deposited.

Its subcellular location is the plastid. It localises to the chloroplast. The catalysed reaction is 4 Fe(2+) + O2 + 4 H(+) = 4 Fe(3+) + 2 H2O. Its function is as follows. Stores iron in a soluble, non-toxic, readily available form. Important for iron homeostasis. Has ferroxidase activity. Iron is taken up in the ferrous form and deposited as ferric hydroxides after oxidation. The chain is Ferritin-2, chloroplastic (FER2) from Nicotiana tabacum (Common tobacco).